A 150-amino-acid polypeptide reads, in one-letter code: Ribonuclease HI (150 aa).

The RNase H type-1 domain occupies 1 to 141 (MKLINAYTDG…VDVLARGQAM (141 aa)). Positions 9, 47, 69, and 133 each coordinate Mg(2+).

This sequence belongs to the RNase H family. As to quaternary structure, monomer. Requires Mg(2+) as cofactor.

The protein resides in the cytoplasm. The catalysed reaction is Endonucleolytic cleavage to 5'-phosphomonoester.. Functionally, endonuclease that specifically degrades the RNA of RNA-DNA hybrids. The chain is Ribonuclease HI from Xylella fastidiosa (strain Temecula1 / ATCC 700964).